Reading from the N-terminus, the 61-residue chain is Small ribosomal subunit protein uS14 (61 aa).

Zn(2+) contacts are provided by cysteine 24, cysteine 27, cysteine 40, and cysteine 43.

The protein belongs to the universal ribosomal protein uS14 family. Zinc-binding uS14 subfamily. In terms of assembly, part of the 30S ribosomal subunit. Contacts proteins S3 and S10. The cofactor is Zn(2+).

Binds 16S rRNA, required for the assembly of 30S particles and may also be responsible for determining the conformation of the 16S rRNA at the A site. In Thermotoga maritima (strain ATCC 43589 / DSM 3109 / JCM 10099 / NBRC 100826 / MSB8), this protein is Small ribosomal subunit protein uS14.